Here is an 810-residue protein sequence, read N- to C-terminus: Lon protease (810 aa).

The 194-residue stretch at Leu-40–Ile-233 folds into the Lon N-terminal domain. Gly-385–Thr-392 contacts ATP. Positions Leu-621 to Gly-802 constitute a Lon proteolytic domain. Residues Ser-708 and Lys-751 contribute to the active site.

Belongs to the peptidase S16 family. As to quaternary structure, homohexamer. Organized in a ring with a central cavity.

It is found in the cytoplasm. The enzyme catalyses Hydrolysis of proteins in presence of ATP.. Functionally, ATP-dependent serine protease that mediates the selective degradation of mutant and abnormal proteins as well as certain short-lived regulatory proteins. Required for cellular homeostasis and for survival from DNA damage and developmental changes induced by stress. Degrades polypeptides processively to yield small peptide fragments that are 5 to 10 amino acids long. Binds to DNA in a double-stranded, site-specific manner. This is Lon protease from Methylocella silvestris (strain DSM 15510 / CIP 108128 / LMG 27833 / NCIMB 13906 / BL2).